The primary structure comprises 234 residues: Sugar fermentation stimulation protein A (234 aa).

A DNA-binding region (H-T-H motif) is located at residues 201 to 220 (LLSEAQQRGVEILAYKAELS).

It belongs to the SfsA family.

In terms of biological role, binds to DNA non-specifically. Could be a regulatory factor involved in maltose metabolism. This chain is Sugar fermentation stimulation protein A, found in Escherichia coli O7:K1 (strain IAI39 / ExPEC).